Reading from the N-terminus, the 386-residue chain is Succinate--CoA ligase [ADP-forming] subunit beta (386 aa).

The 236-residue stretch at 9 to 244 folds into the ATP-grasp domain; that stretch reads KEILRKYGVP…HDEEDPLETR (236 aa). ATP is bound by residues Lys46, 53-55, Glu99, Cys102, and Glu107; that span reads GRG. Mg(2+) is bound by residues Asn199 and Asp213. Substrate contacts are provided by residues Asn264 and 321-323; that span reads GIM.

This sequence belongs to the succinate/malate CoA ligase beta subunit family. In terms of assembly, heterotetramer of two alpha and two beta subunits. The cofactor is Mg(2+).

It carries out the reaction succinate + ATP + CoA = succinyl-CoA + ADP + phosphate. The enzyme catalyses GTP + succinate + CoA = succinyl-CoA + GDP + phosphate. It participates in carbohydrate metabolism; tricarboxylic acid cycle; succinate from succinyl-CoA (ligase route): step 1/1. In terms of biological role, succinyl-CoA synthetase functions in the citric acid cycle (TCA), coupling the hydrolysis of succinyl-CoA to the synthesis of either ATP or GTP and thus represents the only step of substrate-level phosphorylation in the TCA. The beta subunit provides nucleotide specificity of the enzyme and binds the substrate succinate, while the binding sites for coenzyme A and phosphate are found in the alpha subunit. This is Succinate--CoA ligase [ADP-forming] subunit beta from Rickettsia rickettsii (strain Iowa).